The primary structure comprises 180 residues: Chromosome-anchoring protein RacA (180 aa).

A DNA-binding region (H-T-H motif) is located at residues 5–25 (TPFIAKKLGVSPKAVVRIAQQ). The stretch at 67–151 (KASSNEVEEL…LEAALTKEEP (85 aa)) forms a coiled coil.

This sequence belongs to the RacA family.

It localises to the cytoplasm. Functionally, required for the formation of axial filaments and for anchoring the origin regions at the cell poles in sporulating cells, thus ensuring proper chromosome segregation in the prespore. Binds in a dispersed manner throughout the chromosome but preferentially to sites clustered in the origin portion of the chromosome, causing condensation of the chromosome and its remodeling into an elongated, anchored structure. This is Chromosome-anchoring protein RacA from Bacillus cereus (strain B4264).